The sequence spans 876 residues: MAP7 domain-containing protein 3 (876 aa).

An N-acetylmethionine modification is found at Met-1. Residues Asn-65–Ala-144 adopt a coiled-coil conformation. Disordered regions lie at residues Ala-72–Ala-137 and Ala-170–Val-246. Residues Met-171–Ser-183 are compositionally biased toward polar residues. Position 185 is a phosphoserine (Ser-185). Over residues Gln-191 to Val-211 the composition is skewed to polar residues. Basic and acidic residues predominate over residues Arg-214–Pro-244. Ser-322 carries the phosphoserine modification. The disordered stretch occupies residues Glu-407–Met-475. The span at Ala-425 to Met-438 shows a compositional bias: basic and acidic residues. Residues Ser-441, Ser-457, and Ser-461 each carry the phosphoserine modification. Basic and acidic residues predominate over residues Lys-465–Met-475. Ser-490 carries the phosphoserine modification. Disordered stretches follow at residues Ser-509–Ser-533, Gln-613–His-697, and Arg-723–Asp-754. Positions Pro-510–Cys-521 are enriched in polar residues. Residue Ser-524 is modified to Phosphoserine. Coiled coils occupy residues Val-558–Glu-640 and Glu-689–Lys-724. Basic and acidic residues-rich tracts occupy residues Gln-613–Lys-639 and Gly-680–His-697. Positions Glu-742–Asp-752 are enriched in acidic residues. Residues Ser-770 and Ser-817 each carry the phosphoserine modification. The tract at residues Pro-802–Gln-876 is disordered. Over residues Asp-820–Pro-830 the composition is skewed to polar residues. The span at Ser-831–Thr-842 shows a compositional bias: basic residues. Residue Ser-832 is modified to Phosphoserine. A compositionally biased stretch (polar residues) spans Thr-848 to Ser-860. A compositionally biased stretch (basic and acidic residues) spans Glu-861 to Gln-876.

The protein belongs to the MAP7 family. Interacts (via N-terminus coiled coil domains) with tubulin and microtubules.

The protein resides in the cytoplasm. Its subcellular location is the cytoskeleton. The protein localises to the spindle. Its function is as follows. Promotes the assembly and stability of microtubules. The chain is MAP7 domain-containing protein 3 (MAP7D3) from Homo sapiens (Human).